Consider the following 108-residue polypeptide: UPF0060 membrane protein YnfA (108 aa).

The Periplasmic portion of the chain corresponds to 1–5 (MIKTT). The helical transmembrane segment at 6-26 (LLFFATALCEIIGCFLPWLWL) threads the bilayer. Residues 27–30 (KRNA) lie on the Cytoplasmic side of the membrane. A helical membrane pass occupies residues 31–51 (SIWLLLPAGISLALFVWLLTL). The Periplasmic portion of the chain corresponds to 52 to 60 (HPAASGRVY). The helical transmembrane segment at 61–81 (AAYGGVYVCTALMWLRVVDGV) threads the bilayer. The Cytoplasmic portion of the chain corresponds to 82-84 (KLT). Residues 85–105 (LYDWTGALIALCGMLIIVAGW) form a helical membrane-spanning segment. Over 106-108 (GRT) the chain is Periplasmic.

The protein belongs to the UPF0060 family.

It localises to the cell inner membrane. This is UPF0060 membrane protein YnfA from Escherichia coli O139:H28 (strain E24377A / ETEC).